A 133-amino-acid polypeptide reads, in one-letter code: Core atranone cluster (CAC) protein 11 (133 aa).

It participates in mycotoxin biosynthesis. In terms of biological role, part of the core atranone cluster (CAC) which products are predicted to catalyze most or all steps of mycotoxin atranone synthesis, starting from geranylgeranyl pyrophosphate (GGPP). The initial cyclization of GGPP to dolabellane is probably performed by the terpene cyclase ATR13. The Baeyer-Villiger oxidation near the end of the atranone synthesis, which converts atranones D and E to atranones F and G is predicted to be catalyzed by the monooxygenase ATR8. Of the CAC's other predicted gene products, the reducing PKS ATR6 might synthesize a polyketide chain. This polyketide is probably transferred onto the atranone backbone by the polyketide transferase ATR5. Other predicted CAC products include 4 oxygenases (ATR2, ATR3, ATR4, and ATR14), 3 short-chain reductases (ATR7, ATR9, and ATR10), and a methyltransferase (ATR12). These may all be involved in the various steps of atranone biosynthesis, although their specific roles must await experimental determination. This chain is Core atranone cluster (CAC) protein 11, found in Stachybotrys chlorohalonatus (strain IBT 40285).